The chain runs to 437 residues: Trigger factor (437 aa).

Residues 161–246 (DDQVNIDFVG…VNSVSAPVLP (86 aa)) form the PPIase FKBP-type domain.

The protein belongs to the FKBP-type PPIase family. Tig subfamily.

It localises to the cytoplasm. It catalyses the reaction [protein]-peptidylproline (omega=180) = [protein]-peptidylproline (omega=0). In terms of biological role, involved in protein export. Acts as a chaperone by maintaining the newly synthesized protein in an open conformation. Functions as a peptidyl-prolyl cis-trans isomerase. The sequence is that of Trigger factor from Pseudomonas putida (strain ATCC 47054 / DSM 6125 / CFBP 8728 / NCIMB 11950 / KT2440).